Consider the following 560-residue polypeptide: DNA ligase B (560 aa).

The active-site N6-AMP-lysine intermediate is the Lys-124.

This sequence belongs to the NAD-dependent DNA ligase family. LigB subfamily.

The catalysed reaction is NAD(+) + (deoxyribonucleotide)n-3'-hydroxyl + 5'-phospho-(deoxyribonucleotide)m = (deoxyribonucleotide)n+m + AMP + beta-nicotinamide D-nucleotide.. Catalyzes the formation of phosphodiester linkages between 5'-phosphoryl and 3'-hydroxyl groups in double-stranded DNA using NAD as a coenzyme and as the energy source for the reaction. The protein is DNA ligase B of Escherichia coli (strain SMS-3-5 / SECEC).